We begin with the raw amino-acid sequence, 301 residues long: Polyamine aminopropyltransferase (301 aa).

The region spanning 4 to 240 is the PABS domain; that stretch reads WHWLLEWQTP…GLWGFVYGGV (237 aa). S-methyl-5'-thioadenosine is bound at residue Gln-33. The spermidine site is built by His-64 and Glu-89. Residues Asp-109 and 141–142 contribute to the S-methyl-5'-thioadenosine site; that span reads DG. The active-site Proton acceptor is the Asp-159.

It belongs to the spermidine/spermine synthase family. Homotrimer.

It localises to the cytoplasm. It catalyses the reaction S-adenosyl 3-(methylsulfanyl)propylamine + putrescine = S-methyl-5'-thioadenosine + spermidine + H(+). The catalysed reaction is S-adenosyl 3-(methylsulfanyl)propylamine + propane-1,3-diamine = norspermidine + S-methyl-5'-thioadenosine + H(+). The enzyme catalyses norspermidine + S-adenosyl 3-(methylsulfanyl)propylamine = norspermine + S-methyl-5'-thioadenosine + H(+). It carries out the reaction S-adenosyl 3-(methylsulfanyl)propylamine + spermidine = thermospermine + S-methyl-5'-thioadenosine + H(+). Its pathway is amine and polyamine biosynthesis; spermidine biosynthesis; spermidine from putrescine: step 1/1. Its activity is regulated as follows. Competitively inhibited by 5-methylthioadenosine, 5-methylthiotubercidin, S-adenosyl(5)-3-thiopropylamine and S-adenosyl-3-thio-l,8-diaminooctane. Functionally, involved in the biosynthesis of polyamines which are thought to support the growth of thermophilic microorganisms under high-temperature conditions. It seems that long-chain and branched-chain of polyamines effectively stabilize DNA and RNA, respectively. Catalyzes the irreversible transfer of a propylamine group from the amino donor S-adenosylmethioninamine (decarboxy-AdoMet) to various amine acceptors such as putrescine (1,4-diaminobutane), 1,3-diaminopropane, sym-norspermidine and spermidine. The biosynthesis of caldopentamine from norspermine has been also observed, but with a very low activity. The reaction involves a nucleophilic attack on the C-3 methylene of the propylamine moiety adjacent to the positively charged sulfur of decarboxy-AdoMet. S-adenosylmethioninamine is the only amino donor. The protein is Polyamine aminopropyltransferase of Saccharolobus solfataricus (strain ATCC 35092 / DSM 1617 / JCM 11322 / P2) (Sulfolobus solfataricus).